The sequence spans 89 residues: Sec-independent protein translocase protein TatA (89 aa).

The helical transmembrane segment at 1 to 21 (MGGISIWQLLIIALIVVLLFG) threads the bilayer. The span at 47 to 61 (EEKKALEENATDKPA) shows a compositional bias: basic and acidic residues. Positions 47–89 (EEKKALEENATDKPAADTAKVTETAKVAETAEKKAESKGKEQA) are disordered. The segment covering 62–74 (ADTAKVTETAKVA) has biased composition (low complexity). Positions 75-89 (ETAEKKAESKGKEQA) are enriched in basic and acidic residues.

The protein belongs to the TatA/E family. As to quaternary structure, the Tat system comprises two distinct complexes: a TatABC complex, containing multiple copies of TatA, TatB and TatC subunits, and a separate TatA complex, containing only TatA subunits. Substrates initially bind to the TatABC complex, which probably triggers association of the separate TatA complex to form the active translocon.

Its subcellular location is the cell inner membrane. Its function is as follows. Part of the twin-arginine translocation (Tat) system that transports large folded proteins containing a characteristic twin-arginine motif in their signal peptide across membranes. TatA could form the protein-conducting channel of the Tat system. This Shewanella pealeana (strain ATCC 700345 / ANG-SQ1) protein is Sec-independent protein translocase protein TatA.